Reading from the N-terminus, the 1203-residue chain is Nitric oxide synthase 3 (1203 aa).

The tract at residues 1–71 (MGNLKSVAQE…PPEGPKFPRV (71 aa)) is disordered. Gly-2 is lipidated: N-myristoyl glycine. 2 S-palmitoyl cysteine lipidation sites follow: Cys-15 and Cys-26. Over residues 15–27 (CGLGLGLGLGLCG) the composition is skewed to gly residues. Position 33 is a phosphothreonine (Thr-33). The segment covering 33-66 (TPAPEPSRAPASLLPPAPEHSPPSSPLTQPPEGP) has biased composition (pro residues). Cys-94 and Cys-99 together coordinate Zn(2+). Positions 98–486 (RCLGSLVFPR…PDPWKGSAAK (389 aa)) are interaction with NOSIP. Position 102 (Ser-102) interacts with (6R)-L-erythro-5,6,7,8-tetrahydrobiopterin. Position 114 is a phosphoserine; by CDK5 (Ser-114). Residue Cys-184 coordinates heme b. Gln-247, Trp-356, Tyr-357, and Glu-361 together coordinate L-arginine. Residue Arg-365 coordinates (6R)-L-erythro-5,6,7,8-tetrahydrobiopterin. Asn-366 provides a ligand contact to L-arginine. Residues Ala-446, Trp-447, and Phe-460 each contribute to the (6R)-L-erythro-5,6,7,8-tetrahydrobiopterin site. Tyr-475 is a binding site for heme b. Positions 491–510 (TRKKTFKEVANAVKISASLM) are calmodulin-binding. Thr-495 bears the Phosphothreonine; by AMPK mark. The Flavodoxin-like domain maps to 520-703 (ATILYGSETG…AFRGWAQAAF (184 aa)). FMN-binding residues include Ser-526, Glu-527, Thr-528, Arg-530, Ser-572, and Thr-573. Phosphoserine occurs at positions 615, 633, and 638. Ser-654, Cys-661, Glu-687, and Gln-691 together coordinate FMN. The FAD-binding FR-type domain maps to 756-1002 (RKMFQATIRS…IRGAPSFRLP (247 aa)). Arg-776 is a binding site for NADP(+). His-798 provides a ligand contact to FAD. Residue Ser-836 is modified to Phosphoserine. Residues Arg-938, Tyr-940, Ser-941, Thr-956, Ala-958, Tyr-962, Val-975, Cys-976, and Ser-977 each coordinate FAD. NADP(+)-binding residues include Thr-1016, Arg-1049, Ser-1078, Arg-1079, Lys-1085, Tyr-1087, and Gln-1089. A Phosphothreonine modification is found at Thr-1175. Position 1177 is a phosphoserine; by AMPK (Ser-1177). At Ser-1179 the chain carries Phosphoserine.

It belongs to the NOS family. Homodimer. Interacts with NOSIP and NOSTRIN. Interacts with HSP90AB1. Forms a complex with ASL, ASS1 and SLC7A1; the complex regulates cell-autonomous L-arginine synthesis and citrulline recycling while channeling extracellular L-arginine to nitric oxide synthesis pathway. Requires heme b as cofactor. FAD serves as cofactor. It depends on FMN as a cofactor. The cofactor is (6R)-L-erythro-5,6,7,8-tetrahydrobiopterin. Phosphorylation by AMPK at Ser-1177 in the presence of Ca(2+)-calmodulin (CaM) activates activity. In absence of Ca(2+)-calmodulin, AMPK also phosphorylates Thr-495, resulting in inhibition of activity. Phosphorylation of Ser-114 by CDK5 reduces activity. As to expression, platelets, placenta, liver and kidney.

It localises to the cell membrane. The protein resides in the membrane. The protein localises to the caveola. It is found in the cytoplasm. Its subcellular location is the cytoskeleton. It localises to the golgi apparatus. The enzyme catalyses 2 L-arginine + 3 NADPH + 4 O2 + H(+) = 2 L-citrulline + 2 nitric oxide + 3 NADP(+) + 4 H2O. With respect to regulation, stimulated by calcium/calmodulin. Inhibited by NOSIP and NOSTRIN. Produces nitric oxide (NO) which is implicated in vascular smooth muscle relaxation through a cGMP-mediated signal transduction pathway. NO mediates vascular endothelial growth factor (VEGF)-induced angiogenesis in coronary vessels and promotes blood clotting through the activation of platelets. Its function is as follows. Lacks eNOS activity, dominant-negative form that may down-regulate eNOS activity by forming heterodimers with isoform 1. The protein is Nitric oxide synthase 3 of Homo sapiens (Human).